A 428-amino-acid polypeptide reads, in one-letter code: Bacteriochlorophyll synthase 44.5 kDa chain (428 aa).

The next 12 membrane-spanning stretches (helical) occupy residues 3–23 (LGWLQIFRLGLVQLCIGAVVV), 32–52 (LMVVELALPAVLPGALVALHY), 73–93 (FFVILGMAVLALGAFLAAVAV), 115–135 (GFGVGASGTSLLALLASATEP), 144–164 (ITWLLMIFGIAVTAGTVGHFL), 172–192 (LLWIVAIVTLGAVVLTTLAVW), 225–245 (AFTFFLFLSMTAYFLQELILE), 269–289 (GVFFGMLTVGLALSGLKIGSL), 291–311 (GWVVTGCLGSSLALMAIVALG), 317–337 (ALVPAVIGLGFFNGIFAVAAI), 358–378 (LWGAAQAIAAGFGGLVGAGAA), and 393–413 (LVFGAQALLFIVAAMMATGVV).

This sequence belongs to the PucC family.

It localises to the membrane. It functions in the pathway porphyrin-containing compound metabolism; bacteriochlorophyll biosynthesis (light-independent). The protein is Bacteriochlorophyll synthase 44.5 kDa chain of Rhodobacter capsulatus (strain ATCC BAA-309 / NBRC 16581 / SB1003).